The sequence spans 76 residues: uncharacterized protein (76 aa).

This is an uncharacterized protein from Methanocaldococcus jannaschii (strain ATCC 43067 / DSM 2661 / JAL-1 / JCM 10045 / NBRC 100440) (Methanococcus jannaschii).